The chain runs to 341 residues: Phenylalanine--tRNA ligase alpha subunit (341 aa).

A Mg(2+)-binding site is contributed by Glu-259.

The protein belongs to the class-II aminoacyl-tRNA synthetase family. Phe-tRNA synthetase alpha subunit type 1 subfamily. As to quaternary structure, tetramer of two alpha and two beta subunits. It depends on Mg(2+) as a cofactor.

The protein localises to the cytoplasm. It carries out the reaction tRNA(Phe) + L-phenylalanine + ATP = L-phenylalanyl-tRNA(Phe) + AMP + diphosphate + H(+). The chain is Phenylalanine--tRNA ligase alpha subunit from Mycobacterium bovis (strain ATCC BAA-935 / AF2122/97).